The sequence spans 234 residues: MAKLTKRMRVIREKVDATKQYDINEAIALLKELATAKFVESVDVAVNLGIDARKSDQNVRGATVLPHGTGRSVRVAVFTQGANAEAAKAAGAELVGMEDLADQIKKGEMNFDVVIASPDAMRVVGQLGQVLGPRGLMPNPKVGTVTPNVAEAVKNAKAGQVRYRNDKNGIIHTTIGKVDFDADKLKENLEALLVALKKAKPTQAKGVYIKKVSISTTMGAGVAVDQAGLSASVN.

This sequence belongs to the universal ribosomal protein uL1 family. As to quaternary structure, part of the 50S ribosomal subunit.

Binds directly to 23S rRNA. The L1 stalk is quite mobile in the ribosome, and is involved in E site tRNA release. In terms of biological role, protein L1 is also a translational repressor protein, it controls the translation of the L11 operon by binding to its mRNA. The chain is Large ribosomal subunit protein uL1 from Escherichia coli (strain 55989 / EAEC).